Here is a 397-residue protein sequence, read N- to C-terminus: Tryptophan synthase beta chain (397 aa).

At K88 the chain carries N6-(pyridoxal phosphate)lysine.

This sequence belongs to the TrpB family. In terms of assembly, tetramer of two alpha and two beta chains. Pyridoxal 5'-phosphate is required as a cofactor.

It carries out the reaction (1S,2R)-1-C-(indol-3-yl)glycerol 3-phosphate + L-serine = D-glyceraldehyde 3-phosphate + L-tryptophan + H2O. The protein operates within amino-acid biosynthesis; L-tryptophan biosynthesis; L-tryptophan from chorismate: step 5/5. The beta subunit is responsible for the synthesis of L-tryptophan from indole and L-serine. The protein is Tryptophan synthase beta chain (trpB) of Haemophilus influenzae (strain ATCC 51907 / DSM 11121 / KW20 / Rd).